The primary structure comprises 135 residues: Cytochrome b5, seed isoform (135 aa).

One can recognise a Cytochrome b5 heme-binding domain in the interval 5 to 81 (SKVFTLAEVS…LDEYYVGDID (77 aa)). Heme contacts are provided by H40 and H64. A helical membrane pass occupies residues 107-127 (FIVKLLQFLVPLIILGVAFGV).

It belongs to the cytochrome b5 family. Specifically expressed in developing seeds.

The protein resides in the endoplasmic reticulum membrane. It is found in the microsome membrane. Functionally, cytochrome b5 is a membrane bound hemoprotein which function as an electron carrier for several membrane bound oxygenases. May play a key role in the modification by desaturation of fatty acids in the endoplasmic reticulum, which in the developing seed is utilized for membrane synthesis and in the developmentally regulated production of large amounts of storage lipids. The chain is Cytochrome b5, seed isoform from Nicotiana tabacum (Common tobacco).